The primary structure comprises 251 residues: Putative glutathione-independent glyoxalase hsp3105 (251 aa).

This sequence belongs to the peptidase C56 family. HSP31-like subfamily.

It localises to the cytoplasm. The protein localises to the nucleus. The enzyme catalyses methylglyoxal + H2O = (R)-lactate + H(+). Functionally, may catalyze the conversion of methylglyoxal (MG) to D-lactate in a single glutathione (GSH)-independent step. May play a role in detoxifying endogenously produced glyoxals. Involved in protection against reactive oxygen species (ROS). This is Putative glutathione-independent glyoxalase hsp3105 from Schizosaccharomyces pombe (strain 972 / ATCC 24843) (Fission yeast).